We begin with the raw amino-acid sequence, 305 residues long: UDP-3-O-acyl-N-acetylglucosamine deacetylase (305 aa).

Positions 79, 238, and 242 each coordinate Zn(2+). The active-site Proton donor is the histidine 265.

Belongs to the LpxC family. It depends on Zn(2+) as a cofactor.

It carries out the reaction a UDP-3-O-[(3R)-3-hydroxyacyl]-N-acetyl-alpha-D-glucosamine + H2O = a UDP-3-O-[(3R)-3-hydroxyacyl]-alpha-D-glucosamine + acetate. It functions in the pathway glycolipid biosynthesis; lipid IV(A) biosynthesis; lipid IV(A) from (3R)-3-hydroxytetradecanoyl-[acyl-carrier-protein] and UDP-N-acetyl-alpha-D-glucosamine: step 2/6. Its function is as follows. Catalyzes the hydrolysis of UDP-3-O-myristoyl-N-acetylglucosamine to form UDP-3-O-myristoylglucosamine and acetate, the committed step in lipid A biosynthesis. In Pasteurella multocida (strain Pm70), this protein is UDP-3-O-acyl-N-acetylglucosamine deacetylase.